Reading from the N-terminus, the 255-residue chain is NAD-dependent protein deacylase (255 aa).

Residues 1–252 (MPKLVVFSGA…AEIEQELEQF (252 aa)) enclose the Deacetylase sirtuin-type domain. 9-28 (GAGLSAESGLETFRDNGGLW) lines the NAD(+) pocket. Substrate-binding residues include Tyr53 and Arg56. An NAD(+)-binding site is contributed by 103-106 (QNVD). His121 (proton acceptor) is an active-site residue. Residues Cys129, Cys132, Cys148, and Cys151 each contribute to the Zn(2+) site. NAD(+)-binding positions include 190–192 (GTS), 218–220 (NLQ), and Thr238.

This sequence belongs to the sirtuin family. Class III subfamily. Requires Zn(2+) as cofactor.

It is found in the cytoplasm. The catalysed reaction is N(6)-acetyl-L-lysyl-[protein] + NAD(+) + H2O = 2''-O-acetyl-ADP-D-ribose + nicotinamide + L-lysyl-[protein]. The enzyme catalyses N(6)-succinyl-L-lysyl-[protein] + NAD(+) + H2O = 2''-O-succinyl-ADP-D-ribose + nicotinamide + L-lysyl-[protein]. Its function is as follows. NAD-dependent lysine deacetylase and desuccinylase that specifically removes acetyl and succinyl groups on target proteins. Modulates the activities of several proteins which are inactive in their acylated form. The sequence is that of NAD-dependent protein deacylase from Helicobacter hepaticus (strain ATCC 51449 / 3B1).